The sequence spans 380 residues: GDP-mannose:cellobiosyl-diphosphopolyprenol alpha-mannosyltransferase (380 aa).

This sequence belongs to the glycosyltransferase group 1 family. Glycosyltransferase 4 subfamily.

It catalyses the reaction beta-D-Glc-(1-&gt;4)-alpha-D-Glc-di-trans,octa-cis-undecaprenyl diphosphate + GDP-alpha-D-mannose = alpha-D-Man-(1-&gt;3)-beta-D-Glc-(1-&gt;4)-alpha-D-Glc-1-di-trans,octa-cis-undecaprenyl diphosphate + GDP + H(+). Its function is as follows. Involved in the biosynthesis of the exopolysaccharide xanthan, a polymer that is comprised of repeating pentasaccharide units with the structure of a beta-(1,4)-linked D-glucose backbone with trisaccharide side chains composed of mannose-beta-(1,4)-glucuronic acid-beta-(1,2)-mannose attached to alternate glucose residues in the backbone by alpha-(1,3) linkages. Xanthan is involved in pathogenicity but has also been used in a variety of applications as a specialty polymer for commercial applications, including food additives, where they act as viscosifying, stabilizing, emulsifying, or gelling agents. This is GDP-mannose:cellobiosyl-diphosphopolyprenol alpha-mannosyltransferase (gumH) from Xanthomonas oryzae pv. oryzae (strain PXO99A).